Consider the following 426-residue polypeptide: Citrate synthase (426 aa).

Residues H314 and D372 contribute to the active site.

It belongs to the citrate synthase family.

The enzyme catalyses oxaloacetate + acetyl-CoA + H2O = citrate + CoA + H(+). The protein operates within carbohydrate metabolism; tricarboxylic acid cycle; isocitrate from oxaloacetate: step 1/2. In Helicobacter pylori (strain J99 / ATCC 700824) (Campylobacter pylori J99), this protein is Citrate synthase (gltA).